Consider the following 394-residue polypeptide: MIIKRLNFSCRLFSTASTSTSYEKTPIQPATKCLQLAVIGAPNVGKSLLTNSLIRCPLSAVSSKMDTTTRNISASICSDSTQLVFVDSPGAVSTSHVRQTMKKTSATSGDRVLQDPERALQRAQHVLVVQDSTAPGAYIHHRVLHMLHRYSHVPSILVMNKIDLVMRRSDLLPLVEILTNGQLSDNQQISTKPAQIGRLGKSLSTNIQSSSSFKPSDEKWQSQFRELIQKPTWKCSYSETRSLFRTICGWSGFERVFFVSSLNGEGIDELRDHLMSISPQGEWKMQDGMPTGESAQQLCIDSIRAAVLDTTPSDVAYTVQIRISEWEEQGEVLQIVGEIRCQKPRDGSLIIGKGGKRISEIGRRVNEHLHSLFQRQLYARLIVTHNGKLITQSK.

The region spanning 32-280 (KCLQLAVIGA…RDHLMSISPQ (249 aa)) is the Era-type G domain. Positions 40–47 (GAPNVGKS) are G1. 40–47 (GAPNVGKS) provides a ligand contact to GTP. The tract at residues 66-70 (DTTTR) is G2. The segment at 87–90 (DSPG) is G3. Residues 87-91 (DSPGA) and 160-163 (NKID) each bind GTP. The tract at residues 160 to 163 (NKID) is G4. Residues 259–261 (VSS) form a G5 region.

This sequence belongs to the TRAFAC class TrmE-Era-EngA-EngB-Septin-like GTPase superfamily. Era GTPase family.

The protein resides in the mitochondrion matrix. Its subcellular location is the mitochondrion inner membrane. Probable GTPase that plays a role in the mitochondrial ribosomal small subunit assembly. Specifically binds the 12S mitochondrial rRNA (12S mt-rRNA) to a 33 nucleotide section delineating the 3' terminal stem-loop region. May act as a chaperone that protects the 12S mt-rRNA on the 28S mitoribosomal subunit during ribosomal small subunit assembly. May play a role in positively regulating mitochondrial function. Plays a role in fertility. This chain is GTPase Era, mitochondrial, found in Caenorhabditis elegans.